The sequence spans 78 residues: U7-lycotoxin-Ls1f (78 aa).

The signal sequence occupies residues 1–22 (MKLIIFTGLALLLIVSLIDVEA). A propeptide spanning residues 23–26 (QNEG) is cleaved from the precursor.

Belongs to the neurotoxin 19 (CSTX) family. 07 (U7-Lctx) subfamily. Post-translationally, contains 4 disulfide bonds. In terms of tissue distribution, expressed by the venom gland.

The protein localises to the secreted. The protein is U7-lycotoxin-Ls1f of Lycosa singoriensis (Wolf spider).